The primary structure comprises 837 residues: Periplasmic nitrate reductase (837 aa).

The segment at residues 1–32 (MTSPKLDRRQMLKLEAAAIAAAAAGLPVPALA) is a signal peptide (tat-type signal). The 4Fe-4S Mo/W bis-MGD-type domain maps to 44-100 (LKWDKAACRFCGTGCSVMVATKENRVVATHGDIKAEVNRGLNCVKGYFLSKIMYGHD). The [4Fe-4S] cluster site is built by Cys-51, Cys-54, Cys-58, and Cys-86. Mo-bis(molybdopterin guanine dinucleotide)-binding positions include Lys-88, Gln-155, Asn-180, Cys-184, 217–224 (WGSNMAEM), 248–252 (STFEH), 267–269 (QTD), Met-378, Gln-382, Asn-488, 514–515 (SD), Lys-537, Asp-564, and 724–733 (TGRVLEHWHS). Trp-800 contributes to the substrate binding site. 2 residues coordinate Mo-bis(molybdopterin guanine dinucleotide): Asn-808 and Lys-825.

Belongs to the prokaryotic molybdopterin-containing oxidoreductase family. NasA/NapA/NarB subfamily. Component of the periplasmic nitrate reductase NapAB complex composed of NapA and NapB. Requires [4Fe-4S] cluster as cofactor. Mo-bis(molybdopterin guanine dinucleotide) is required as a cofactor. Post-translationally, predicted to be exported by the Tat system. The position of the signal peptide cleavage has not been experimentally proven.

The protein localises to the periplasm. The catalysed reaction is 2 Fe(II)-[cytochrome] + nitrate + 2 H(+) = 2 Fe(III)-[cytochrome] + nitrite + H2O. In terms of biological role, catalytic subunit of the periplasmic nitrate reductase complex NapAB. Receives electrons from NapB and catalyzes the reduction of nitrate to nitrite. The protein is Periplasmic nitrate reductase of Bradyrhizobium diazoefficiens (strain JCM 10833 / BCRC 13528 / IAM 13628 / NBRC 14792 / USDA 110).